A 369-amino-acid chain; its full sequence is Cytoplasmic tRNA 2-thiolation protein 1 (369 aa).

This sequence belongs to the TtcA family. CTU1/NCS6/ATPBD3 subfamily.

The protein resides in the cytoplasm. It functions in the pathway tRNA modification; 5-methoxycarbonylmethyl-2-thiouridine-tRNA biosynthesis. In terms of biological role, plays a central role in 2-thiolation of mcm(5)S(2)U at tRNA wobble positions of tRNA(Lys), tRNA(Glu) and tRNA(Gln). Directly binds tRNAs and probably acts by catalyzing adenylation of tRNAs, an intermediate required for 2-thiolation. It is unclear whether it acts as a sulfurtransferase that transfers sulfur from thiocarboxylated URM1 onto the uridine of tRNAs at wobble position. Prior mcm(5) tRNA modification by the elongator complex is required for 2-thiolation. May also be involved in protein urmylation. The sequence is that of Cytoplasmic tRNA 2-thiolation protein 1 from Cryptococcus neoformans var. neoformans serotype D (strain JEC21 / ATCC MYA-565) (Filobasidiella neoformans).